The primary structure comprises 46 residues: Short transmembrane mitochondrial protein 1 (46 aa).

The helical transmembrane segment at 7 to 23 (GFTLGNVVGMYLAQNYE) threads the bilayer.

This sequence belongs to the STMP1 family. As to expression, widely expressed. Expressed more abundantly in brain compared with other tissues such as heart, muscle and liver.

It localises to the mitochondrion inner membrane. Its subcellular location is the mitochondrion outer membrane. It is found in the mitochondrion intermembrane space. Its function is as follows. Microprotein involved in mitochondrial respiratory chain complex III (ubiquinol-cytochrome c oxidoreductase) and complex IV (mitochondrial cytochrome c oxidase complex) assembly. Required for the formation of mitochondrial supercomplexes (SCs). Also required for the activation of the NLRP3 inflammasome. This chain is Short transmembrane mitochondrial protein 1, found in Danio rerio (Zebrafish).